Here is a 208-residue protein sequence, read N- to C-terminus: MIKKVAAKPLSWLERIFFIDFIKGLRITLKNALRKTITTHYPYEKITPPKRFRGYFAHKVVDGTEPQPAFQEWVNRYNILVEYGKSRCVVCLRCKRACPVPQLFEIEGKKLPNGKRVVSVFNMNMLLCTYCGFCVDACPVDCLYQTDIHENASYTRKDAVLTLEILEQIGRDWQRRREREPDRIWIDDEQRMKLWGENNVKLPKPEEV.

4Fe-4S ferredoxin-type domains follow at residues 79 to 109 and 119 to 148; these read ILVE…IEGK and SVFN…QTDI. Positions 88, 91, 94, 98, 128, 131, 134, and 138 each coordinate [4Fe-4S] cluster.

Belongs to the complex I 23 kDa subunit family. In terms of assembly, NDH-1 is composed of 14 different subunits. Subunits NuoA, H, J, K, L, M, N constitute the membrane sector of the complex. The cofactor is [4Fe-4S] cluster.

It is found in the cell inner membrane. The enzyme catalyses a quinone + NADH + 5 H(+)(in) = a quinol + NAD(+) + 4 H(+)(out). NDH-1 shuttles electrons from NADH, via FMN and iron-sulfur (Fe-S) centers, to quinones in the respiratory chain. The immediate electron acceptor for the enzyme in this species is believed to be ubiquinone. Couples the redox reaction to proton translocation (for every two electrons transferred, four hydrogen ions are translocated across the cytoplasmic membrane), and thus conserves the redox energy in a proton gradient. The protein is NADH-quinone oxidoreductase subunit I 2 of Aquifex aeolicus (strain VF5).